The chain runs to 779 residues: MRTLEDSSGTVLHRLIQEQLRYGNLTETRTLLAIQQQALRGGAGTGGTGSPQASLEILAPEDSQVLQQATRQEPQGQEHQGGENHLAENTLYRLCPQPSKGEELPTYEEAKAHSQYYAAQQAGTRPHAGDRDPRGAPGGSRRQDEALRELRHGHVRSLSERLLQLSLERNGARAPSHMSSSHSFPQLARNQQGPPLRGPPAEGPESRGPPPQYPHVVLAHETTTAVTDPRYRARGSPHFQHAEVRILQAQVPPVFLQQQQQYQYLQQSQEHPPPPHPAALGHGPLSSLSPPAVEGPVSAQASSATSGSAHLAQMEAVLRENARLQRDNERLQRELESSAEKAGRIEKLESEIQRLSEAHESLTRASSKREALEKTMRNKMDSEMRRLQDFNRDLRERLESANRRLASKTQEAQAGSQDMVAKLLAQSYEQQQEQEKLEREMALLRGAIEDQRRRAELLEQALGNAQGRAARAEEELRKKQAYVEKVERLQQALGQLQAACEKREQLELRLRTRLEQELKALRAQQRQAGAPGGSSGSGGSPELSALRLSEQLREKEEQILALEADMTKWEQKYLEERAMRQFAMDAAATAAAQRDTTLIRHSPQPSPSSSFNEGLLTGGHRHQEMESRLKVLHAQILEKDAVIKVLQQRSRRDPGKAIQGSLRPAKSVPSVFAAAAAGTQGWQGLSSSERQTADAPARLTTDRAPTEEPVVTAPPAAHAKHGSRDGSTQTEGPPDSTSTCLPPEPDSLLGCSSSQRAASLDSVATSRVQDLSDMVEILI.

Disordered regions lie at residues 41 to 215 (GGAG…QYPH) and 263 to 308 (QYLQ…TSGS). 2 stretches are compositionally biased toward basic and acidic residues: residues 100–112 (KGEE…EAKA) and 141–152 (RRQDEALRELRH). Positions 101-307 (GEELPTYEEA…SAQASSATSG (207 aa)) are required for interaction with CDH5. Tyr-107 carries the post-translational modification Phosphotyrosine; by FGFR1. Positions 160–169 (ERLLQLSLER) are enriched in low complexity. Positions 177–193 (HMSSSHSFPQLARNQQG) are enriched in polar residues. Positions 196 to 213 (LRGPPAEGPESRGPPPQY) are enriched in pro residues. The tract at residues 220–307 (HETTTAVTDP…SAQASSATSG (88 aa)) is required for interaction with CDH1. Over residues 298–308 (SAQASSATSGS) the composition is skewed to low complexity. A coiled-coil region spans residues 308–581 (SAHLAQMEAV…KYLEERAMRQ (274 aa)). Residues Lys-347 and Lys-408 each participate in a glycyl lysine isopeptide (Lys-Gly) (interchain with G-Cter in ubiquitin) cross-link. Disordered stretches follow at residues 522 to 543 (RAQQ…SPEL) and 679 to 753 (TQGW…GCSS). Positions 530–539 (APGGSSGSGG) are enriched in gly residues. Polar residues-rich tracts occupy residues 680–690 (QGWQGLSSSER) and 725–740 (DGST…TSTC). Phosphoserine occurs at positions 759 and 762. Positions 776–779 (EILI) match the PDZ-binding motif.

Belongs to the angiomotin family. As to quaternary structure, part of a complex composed of AMOTL2, MAGI1 and CDH5, within the complex AMOTL2 acts as a scaffold protein for the interaction of MAGI1 with CDH5. The complex is required for coupling actin fibers to cell junctions in endothelial cells. Within the complex AMOTL2 (via its N-terminus) interacts with CDH5. Interacts (via N-terminus) with MAGI1. Interacts (via N-terminus) with ACTB; the interaction facilitates binding of cell junction complexes to actin fibers in endothelial cells. Interacts with CDH1; the interaction may facilitate binding of radial actin fibers to cell junction complexes. Interacts with SRC. Interacts with YAP1; the interaction is required for ubiquitination of AMOTL2 and localization of YAP1 to tight junctions. Interacts with WWP1; the interaction facilitates WWP1 interaction with the Crumbs complex and subsequent WWP1 translocation to the plasma membrane. WWP1 interaction with the Crumbs complex promotes WWP1 monoubiquitination of AMOTL2 which subsequently activates the Hippo signaling pathway. When ubiquitinated interacts with LATS2 (via UBA domain); the interaction promotes LATS2 phosphorylation of YAP1. Interacts (via PPXY motif) with WWTR1/TAZ (via WW domain); the interaction promotes WWTR1/TAZ localization to the cytoplasm and thereby inhibition of its transcriptional properties. Interacts with PHLDB2; interaction may facilitate PHLDB2 localization to the myotube podosome cortex that surrounds the core. In terms of processing, monoubiquitinated at Lys-347 and Lys-408 by Crumbs complex-bound WWP1. De-ubiquitinated at Lys-347 and Lys-408 by USP9X; the interaction may be promoted by cell contact inhibition. Deubiquitination of AMOTL2 negatively regulates Hippo signaling activation. Phosphorylation at Tyr-107 is necessary for efficient binding to SRC and synergistically functioning with SRC to activate the downstream MAPK pathway.

The protein resides in the recycling endosome. It is found in the cytoplasm. Its subcellular location is the cell projection. It localises to the podosome. The protein localises to the cell junction. In terms of biological role, regulates the translocation of phosphorylated SRC to peripheral cell-matrix adhesion sites. Required for proper architecture of actin filaments. Plays a role in coupling actin fibers to cell junctions in endothelial cells and is therefore required for correct endothelial cell morphology via facilitating transcellular transmission of mechanical force resulting in endothelial cell elongation. Required for the anchoring of radial actin fibers to CDH1 junction complexes at the cell membrane which facilitates organization of radial actin fiber structure and cellular response to contractile forces. This contributes to maintenance of cell area, size, shape, epithelial sheet organization and trophectoderm cell properties that facilitate blastocyst zona hatching. Inhibits the Wnt/beta-catenin signaling pathway, probably by recruiting CTNNB1 to recycling endosomes and hence preventing its translocation to the nucleus. Participates in angiogenesis. Activates the Hippo signaling pathway in response to cell contact inhibition via interaction with and ubiquitination by Crumbs complex-bound WWP1. Ubiquitinated AMOTL2 then interacts with LATS2 which in turn phosphorylates YAP1, excluding it from the nucleus and localizing it to the cytoplasm and tight junctions, therefore ultimately repressing YAP1-driven transcription of target genes. Acts to inhibit WWTR1/TAZ transcriptional coactivator activity via sequestering WWTR1/TAZ in the cytoplasm and at tight junctions. Regulates the size and protein composition of the podosome cortex and core at myofibril neuromuscular junctions. Selectively promotes FGF-induced MAPK activation through SRC. May play a role in the polarity, proliferation and migration of endothelial cells. The protein is Angiomotin-like protein 2 of Homo sapiens (Human).